A 510-amino-acid chain; its full sequence is Probable cytochrome P450 4aa1 (510 aa).

Cys-450 is a heme binding site.

Belongs to the cytochrome P450 family. The cofactor is heme.

The protein localises to the endoplasmic reticulum membrane. It localises to the microsome membrane. May be involved in the metabolism of insect hormones and in the breakdown of synthetic insecticides. This chain is Probable cytochrome P450 4aa1 (Cyp4aa1), found in Drosophila melanogaster (Fruit fly).